A 162-amino-acid chain; its full sequence is ATP synthase subunit b (162 aa).

The chain crosses the membrane as a helical span at residues 6 to 25 (TLFTLVTFLVLMLAVGKVAW).

Belongs to the ATPase B chain family. In terms of assembly, F-type ATPases have 2 components, F(1) - the catalytic core - and F(0) - the membrane proton channel. F(1) has five subunits: alpha(3), beta(3), gamma(1), delta(1), epsilon(1). F(0) has three main subunits: a(1), b(2) and c(10-14). The alpha and beta chains form an alternating ring which encloses part of the gamma chain. F(1) is attached to F(0) by a central stalk formed by the gamma and epsilon chains, while a peripheral stalk is formed by the delta and b chains.

The protein localises to the cell membrane. In terms of biological role, f(1)F(0) ATP synthase produces ATP from ADP in the presence of a proton or sodium gradient. F-type ATPases consist of two structural domains, F(1) containing the extramembraneous catalytic core and F(0) containing the membrane proton channel, linked together by a central stalk and a peripheral stalk. During catalysis, ATP synthesis in the catalytic domain of F(1) is coupled via a rotary mechanism of the central stalk subunits to proton translocation. Component of the F(0) channel, it forms part of the peripheral stalk, linking F(1) to F(0). The polypeptide is ATP synthase subunit b (Lacticaseibacillus casei (strain BL23) (Lactobacillus casei)).